The following is a 117-amino-acid chain: Large ribosomal subunit protein uL18 (117 aa).

The protein belongs to the universal ribosomal protein uL18 family. Part of the 50S ribosomal subunit; part of the 5S rRNA/L5/L18/L25 subcomplex. Contacts the 5S and 23S rRNAs.

Functionally, this is one of the proteins that bind and probably mediate the attachment of the 5S RNA into the large ribosomal subunit, where it forms part of the central protuberance. The protein is Large ribosomal subunit protein uL18 of Klebsiella pneumoniae subsp. pneumoniae (strain ATCC 700721 / MGH 78578).